The following is a 275-amino-acid chain: Light-independent protochlorophyllide reductase iron-sulfur ATP-binding protein (275 aa).

Residues glycine 12–threonine 17 and lysine 41 each bind ATP. Position 16 (serine 16) interacts with Mg(2+). Residues cysteine 97 and cysteine 131 each contribute to the [4Fe-4S] cluster site. Residue asparagine 182–arginine 183 coordinates ATP.

This sequence belongs to the NifH/BchL/ChlL family. Homodimer. Protochlorophyllide reductase is composed of three subunits; BchL, BchN and BchB. [4Fe-4S] cluster serves as cofactor.

The enzyme catalyses chlorophyllide a + oxidized 2[4Fe-4S]-[ferredoxin] + 2 ADP + 2 phosphate = protochlorophyllide a + reduced 2[4Fe-4S]-[ferredoxin] + 2 ATP + 2 H2O. It functions in the pathway porphyrin-containing compound metabolism; bacteriochlorophyll biosynthesis (light-independent). In terms of biological role, component of the dark-operative protochlorophyllide reductase (DPOR) that uses Mg-ATP and reduced ferredoxin to reduce ring D of protochlorophyllide (Pchlide) to form chlorophyllide a (Chlide). This reaction is light-independent. The L component serves as a unique electron donor to the NB-component of the complex, and binds Mg-ATP. This is Light-independent protochlorophyllide reductase iron-sulfur ATP-binding protein from Chlorobium phaeobacteroides (strain BS1).